Consider the following 330-residue polypeptide: Clp protease adapter protein ClpF, chloroplastic (330 aa).

A chloroplast-targeting transit peptide spans 1–65 (MVQSQSLSTL…KSLKQRNLLR (65 aa)). The tract at residues 66-138 (VEARWPFQGG…VEEESIRLQE (73 aa)) is NTD, required for CLPS1-binding. 2 coiled-coil regions span residues 112-139 (NLEQYDIAQQLREKLTEVEEESIRLQEG) and 175-195 (AAKLRDEISKLEAESLAVSAK). In terms of domain architecture, UVR spans 153 to 188 (GISIIRLRADLQNAIDSEDYGLAAKLRDEISKLEAE). Positions 203–310 (EYAFRLGQKL…TAGDFIPVKQ (108 aa)) are yccV-like.

In terms of assembly, binds to CLPC1 and CLPC2. Interacts with ClpS1; this interaction stimulates their association with ClpC. Associates with the Clp substrate HEMA1 (GluTR). As to expression, expressed constitutively in photosynthetic tissues such as leaves, stems and flowers, and, at low levels, in siliques.

The protein localises to the plastid. It is found in the chloroplast. In terms of biological role, clp protease adapter that facilitates CLPS1 recruitment to ClpC chaperones thus forming a binary adapter for selective substrate recognition and delivery to plastid Clp protease system (CLPC). This Arabidopsis thaliana (Mouse-ear cress) protein is Clp protease adapter protein ClpF, chloroplastic.